The sequence spans 286 residues: MVEEVLSYMITNKDGIYVDCTAGEGGHIKAILGYTNNKAKVIGVDVDYEVLEIAEERLKDLSDNVVLIKSSYKNIDMVLRGLGIDKVDGFLMDLGVSTFQLKGENRGFSFTKDEPLDMRMDVQSEKDAAYIVNNYSQEDLRRIIFEYGEEKRFAHSISKSIVKNRPINTTQELVDAIRKGLPASQVHERHRHFATKTFQALRIEVNEELKNIEETLSKFESFLKVKARVAVITFHSLEDRIVKNFFKNNERYNFLTPKPILPTQEEIKHNPRSRSAKLRVVEYLGA.

S-adenosyl-L-methionine-binding positions include 25–27, D45, L79, D93, and Q100; that span reads GGH.

This sequence belongs to the methyltransferase superfamily. RsmH family.

It localises to the cytoplasm. The catalysed reaction is cytidine(1402) in 16S rRNA + S-adenosyl-L-methionine = N(4)-methylcytidine(1402) in 16S rRNA + S-adenosyl-L-homocysteine + H(+). Specifically methylates the N4 position of cytidine in position 1402 (C1402) of 16S rRNA. This Petrotoga mobilis (strain DSM 10674 / SJ95) protein is Ribosomal RNA small subunit methyltransferase H.